We begin with the raw amino-acid sequence, 245 residues long: Nicotinamide/nicotinic acid mononucleotide adenylyltransferase 3 (245 aa).

NAD(+) contacts are provided by Ser14 and Phe15. ATP-binding residues include His22 and Lys56. NAD(+)-binding residues include Trp90, Thr93, Gly134, and Asp136. Lys139 contacts ATP. NAD(+) contacts are provided by Leu146, Trp147, Arg166, and Asn197. Position 202–205 (202–205) interacts with ATP; the sequence is TYVR.

It belongs to the eukaryotic NMN adenylyltransferase family. As to quaternary structure, homotetramer. Mg(2+) is required as a cofactor.

Its subcellular location is the mitochondrion. The catalysed reaction is beta-nicotinamide D-ribonucleotide + ATP + H(+) = diphosphate + NAD(+). It carries out the reaction nicotinate beta-D-ribonucleotide + ATP + H(+) = deamido-NAD(+) + diphosphate. It functions in the pathway cofactor biosynthesis; NAD(+) biosynthesis; NAD(+) from nicotinamide D-ribonucleotide: step 1/1. It participates in cofactor biosynthesis; NAD(+) biosynthesis; deamido-NAD(+) from nicotinate D-ribonucleotide: step 1/1. Activity is strongly inhibited by galotannin. Inhibited by P1-(adenosine-5')-P4-(nicotinic-acid-riboside-5')-tetraphosphate (Nap4AD). In terms of biological role, catalyzes the formation of NAD(+) from nicotinamide mononucleotide (NMN) and ATP. Can also use the deamidated form; nicotinic acid mononucleotide (NaMN) as substrate with the same efficiency. Can use triazofurin monophosphate (TrMP) as substrate. Can also use GTP and ITP as nucleotide donors. Also catalyzes the reverse reaction, i.e. the pyrophosphorolytic cleavage of NAD(+). For the pyrophosphorolytic activity, can use NAD(+), NADH, NaAD, nicotinic acid adenine dinucleotide phosphate (NHD), nicotinamide guanine dinucleotide (NGD) as substrates. Fails to cleave phosphorylated dinucleotides NADP(+), NADPH and NaADP(+). Protects against axonal degeneration following injury. May be involved in the maintenance of axonal integrity. Also functions as a stress-response chaperone protein that prevents toxic aggregation of proteins; this function may be independent of its NAD(+) synthesis activity. The protein is Nicotinamide/nicotinic acid mononucleotide adenylyltransferase 3 of Mus musculus (Mouse).